Consider the following 401-residue polypeptide: Probable 2,3-bisphosphoglycerate-independent phosphoglycerate mutase (401 aa).

It belongs to the BPG-independent phosphoglycerate mutase family. A-PGAM subfamily.

The catalysed reaction is (2R)-2-phosphoglycerate = (2R)-3-phosphoglycerate. It participates in carbohydrate degradation; glycolysis; pyruvate from D-glyceraldehyde 3-phosphate: step 3/5. Functionally, catalyzes the interconversion of 2-phosphoglycerate and 3-phosphoglycerate. This Thermotoga petrophila (strain ATCC BAA-488 / DSM 13995 / JCM 10881 / RKU-1) protein is Probable 2,3-bisphosphoglycerate-independent phosphoglycerate mutase.